We begin with the raw amino-acid sequence, 351 residues long: Phosphoribosylformylglycinamidine cyclo-ligase (351 aa).

It belongs to the AIR synthase family.

Its subcellular location is the cytoplasm. It carries out the reaction 2-formamido-N(1)-(5-O-phospho-beta-D-ribosyl)acetamidine + ATP = 5-amino-1-(5-phospho-beta-D-ribosyl)imidazole + ADP + phosphate + H(+). Its pathway is purine metabolism; IMP biosynthesis via de novo pathway; 5-amino-1-(5-phospho-D-ribosyl)imidazole from N(2)-formyl-N(1)-(5-phospho-D-ribosyl)glycinamide: step 2/2. The sequence is that of Phosphoribosylformylglycinamidine cyclo-ligase from Burkholderia mallei (strain NCTC 10247).